The following is a 220-amino-acid chain: 7-cyano-7-deazaguanine synthase (220 aa).

Residue 10–20 participates in ATP binding; sequence FSGGQDSTTCL. Zn(2+) is bound by residues Cys-188, Cys-197, Cys-200, and Cys-203.

This sequence belongs to the QueC family. It depends on Zn(2+) as a cofactor.

It catalyses the reaction 7-carboxy-7-deazaguanine + NH4(+) + ATP = 7-cyano-7-deazaguanine + ADP + phosphate + H2O + H(+). It participates in purine metabolism; 7-cyano-7-deazaguanine biosynthesis. Its function is as follows. Catalyzes the ATP-dependent conversion of 7-carboxy-7-deazaguanine (CDG) to 7-cyano-7-deazaguanine (preQ(0)). The sequence is that of 7-cyano-7-deazaguanine synthase from Neisseria meningitidis serogroup C (strain 053442).